Consider the following 545-residue polypeptide: T-complex protein 1 subunit gamma (545 aa).

Methionine 1 carries the post-translational modification N-acetylmethionine. Positions 1 to 24 (MMGHRPVLVLSQNTKRESGRKVQS) are disordered. Position 11 is a phosphoserine (serine 11). Residue lysine 15 forms a Glycyl lysine isopeptide (Lys-Gly) (interchain with G-Cter in SUMO2) linkage. ADP is bound at residue glycine 42. An ATP-binding site is contributed by glycine 42. A Mg(2+)-binding site is contributed by aspartate 93. The ADP site is built by glycine 94, threonine 95, threonine 96, serine 97, threonine 162, and lysine 163. Residues glycine 94, threonine 95, and threonine 96 each coordinate ATP. The residue at position 170 (serine 170) is a Phosphoserine. An N6-acetyllysine modification is found at lysine 222. Phosphoserine is present on residues serine 243 and serine 244. Position 247 is a phosphotyrosine (tyrosine 247). Residues lysine 248 and lysine 249 each participate in a glycyl lysine isopeptide (Lys-Gly) (interchain with G-Cter in SUMO2) cross-link. Serine 252 is modified (phosphoserine). A disulfide bridge links cysteine 366 with cysteine 372. Residue lysine 381 forms a Glycyl lysine isopeptide (Lys-Gly) (interchain with G-Cter in SUMO2) linkage. Glycine 411 is an ADP binding site. An ATP-binding site is contributed by glycine 411. A phosphothreonine mark is found at threonine 430 and threonine 459. ADP is bound by residues glycine 482, glutamate 483, glutamate 497, and lysine 502. Glycine 482 contributes to the ATP binding site. Glutamate 497 contacts ATP. Residues 526–545 (HKKKGDDQNRQTGAPDAGQE) form a disordered region.

The protein belongs to the TCP-1 chaperonin family. As to quaternary structure, component of the chaperonin-containing T-complex (TRiC), a hexadecamer composed of two identical back-to-back stacked rings enclosing a protein folding chamber. Each ring is made up of eight different subunits: TCP1/CCT1, CCT2, CCT3, CCT4, CCT5, CCT6A/CCT6, CCT7, CCT8. Interacts with PACRG. Interacts with DNAAF4. Interacts with DLEC1. The N-terminus is blocked.

The protein localises to the cytoplasm. The enzyme catalyses ATP + H2O = ADP + phosphate + H(+). Component of the chaperonin-containing T-complex (TRiC), a molecular chaperone complex that assists the folding of actin, tubulin and other proteins upon ATP hydrolysis. The TRiC complex mediates the folding of WRAP53/TCAB1, thereby regulating telomere maintenance. As part of the TRiC complex may play a role in the assembly of BBSome, a complex involved in ciliogenesis regulating transports vesicles to the cilia. In Mus musculus (Mouse), this protein is T-complex protein 1 subunit gamma (Cct3).